A 1114-amino-acid polypeptide reads, in one-letter code: MLRGTMTAWRGMRPEVTLACLLLATAGCFADLNEVPQVTVQPASTVQKPGGTVILGCVVEPPRMNVTWRLNGKELNGSDDALGVLITHGTLVITALNNHTVGRYQCVARMPAGAVASVPATVTLANLQDFKLDVQHVIEVDEGNTAVIACHLPESHPKAQVRYSVKQEWLEASRGNYLIMPSGNLQIVNASQEDEGMYKCAAYNPVTQEVKTSGSSDRLRVRRSTAEAARIIYPPEAQTIIVTKGQSLILECVASGIPPPRVTWAKDGSSVTGYNKTRFLLSNLLIDTTSEEDSGTYRCMADNGVGQPGAAVILYNVQVFEPPEVTMELSQLVIPWGQSAKLTCEVRGNPPPSVLWLRNAVPLISSQRLRLSRRALRVLSMGPEDEGVYQCMAENEVGSAHAVVQLRTSRPSITPRLWQDAELATGTPPVSPSKLGNPEQMLRGQPALPRPPTSVGPASPQCPGEKGQGAPAEAPIILSSPRTSKTDSYELVWRPRHEGSGRAPILYYVVKHRKVTNSSDDWTISGIPANQHRLTLTRLDPGSLYEVEMAAYNCAGEGQTAMVTFRTGRRPKPEIMASKEQQIQRDDPGASPQSSSQPDHGRLSPPEAPDRPTISTASETSVYVTWIPRGNGGFPIQSFRVEYKKLKKVGDWILATSAIPPSRLSVEITGLEKGTSYKFRVRALNMLGESEPSAPSRPYVVSGYSGRVYERPVAGPYITFTDAVNETTIMLKWMYIPASNNNTPIHGFYIYYRPTDSDNDSDYKKDMVEGDKYWHSISHLQPETSYDIKMQCFNEGGESEFSNVMICETKARKSSGQPGRLPPPTLAPPQPPLPETIERPVGTGAMVARSSDLPYLIVGVVLGSIVLIIVTFIPFCLWRAWSKQKHTTDLGFPRSALPPSCPYTMVPLGGLPGHQASGQPYLSGISGRACANGIHMNRGCPSAAVGYPGMKPQQHCPGELQQQSDTSSLLRQTHLGNGYDPQSHQITRGPKSSPDEGSFLYTLPDDSTHQLLQPHHDCCQRQEQPAAVGQSGVRRAPDSPVLEAVWDPPFHSGPPCCLGLVPVEEVDSPDSCQVSGGDWCPQHPVGAYVGQEPGMQLSPGPLVRVSFETPPLTI.

A signal peptide spans 1 to 30 (MLRGTMTAWRGMRPEVTLACLLLATAGCFA). At 31–855 (DLNEVPQVTV…MVARSSDLPY (825 aa)) the chain is on the extracellular side. Ig-like C2-type domains are found at residues 36–123 (PQVT…ATVT), 129–213 (DFKL…VKTS), 235–315 (PEAQ…VILY), and 323–409 (PEVT…LRTS). 4 disulfides stabilise this stretch: Cys57–Cys106, Cys150–Cys200, Cys252–Cys299, and Cys344–Cys391. N-linked (GlcNAc...) asparagine glycosylation is found at Asn65, Asn76, Asn98, Asn189, and Asn275. Residues 422-474 (ELATGTPPVSPSKLGNPEQMLRGQPALPRPPTSVGPASPQCPGEKGQGAPAEA) form a disordered region. Fibronectin type-III domains follow at residues 474 to 571 (APII…GRRP), 608 to 703 (APDR…VVSG), and 712 to 812 (PVAG…TKAR). N-linked (GlcNAc...) asparagine glycosylation occurs at Asn517. The segment at 577-615 (ASKEQQIQRDDPGASPQSSSQPDHGRLSPPEAPDRPTIS) is disordered. Residues Asn725 and Asn759 are each glycosylated (N-linked (GlcNAc...) asparagine). Positions 812–833 (RKSSGQPGRLPPPTLAPPQPPL) are disordered. Residues 820 to 833 (RLPPPTLAPPQPPL) show a composition bias toward pro residues. Residues 856–876 (LIVGVVLGSIVLIIVTFIPFC) traverse the membrane as a helical segment. The Cytoplasmic segment spans residues 877 to 1114 (LWRAWSKQKH…VSFETPPLTI (238 aa)). The segment covering 972–986 (QTHLGNGYDPQSHQI) has biased composition (polar residues). Residues 972 to 998 (QTHLGNGYDPQSHQITRGPKSSPDEGS) form a disordered region.

Part of a complex that contains BOC, CDON, NEO1, cadherins and CTNNB1. Interacts with NTN3. Interacts with SHH, DHH and IHH. Interacts with CDH2 and CTNNB1. Interacts with CDH15 only during the early stages of myoblast differentiation. Post-translationally, N-glycosylated. As to expression, detected in skeletal muscle, heart, thymus, kidney and small intestine. Detected at lower levels in brain, placenta, lung and colon mucosa.

Its subcellular location is the cell membrane. In terms of biological role, component of a cell-surface receptor complex that mediates cell-cell interactions between muscle precursor cells. Promotes differentiation of myogenic cells. The polypeptide is Brother of CDO (BOC) (Homo sapiens (Human)).